Here is a 605-residue protein sequence, read N- to C-terminus: DNA primase (605 aa).

Residues 38-62 (CPFHDEKTPSFTVSEDKQICHCFGC) form a CHC2-type zinc finger. The region spanning 260–341 (DEIVLLEGFM…NVFVIQLPSG (82 aa)) is the Toprim domain. Mg(2+)-binding residues include glutamate 266, aspartate 310, and aspartate 312.

This sequence belongs to the DnaG primase family. Monomer. Interacts with DnaB. The cofactor is Zn(2+). It depends on Mg(2+) as a cofactor.

The enzyme catalyses ssDNA + n NTP = ssDNA/pppN(pN)n-1 hybrid + (n-1) diphosphate.. RNA polymerase that catalyzes the synthesis of short RNA molecules used as primers for DNA polymerase during DNA replication. The chain is DNA primase from Staphylococcus aureus (strain MSSA476).